The following is a 231-amino-acid chain: Protein usf (231 aa).

In Aquifex pyrophilus, this protein is Protein usf (usf).